A 267-amino-acid chain; its full sequence is Neural/ectodermal development factor IMP-L2 (267 aa).

Positions 1 to 25 are cleaved as a signal peptide; that stretch reads MEAKMNLHVCALALLLFGSIATVRG. Ig-like C2-type domains lie at 48–149 and 174–260; these read PRNR…KTIY and PRII…TFVY. 2 cysteine pairs are disulfide-bonded: C80/C139 and C195/C244.

Detected in several sites including the ventral neuroectoderm, the tracheal pits, the pharynx and esophagus, and specific neuronal cell bodies, where it is primarily expressed.

It is found in the secreted. Its subcellular location is the extracellular space. Essential developmental role during embryogenesis, in particular the normal development of the nervous system. May be involved in some aspect of cell adhesion. This Drosophila melanogaster (Fruit fly) protein is Neural/ectodermal development factor IMP-L2 (ImpL2).